A 122-amino-acid chain; its full sequence is Class I hydrophobin 2 (122 aa).

Positions 1–22 are cleaved as a signal peptide; the sequence is MFARVSTLFAMFFLGLALMVSA. 4 disulfides stabilise this stretch: Cys40–Cys101, Cys47–Cys95, Cys48–Cys81, and Cys102–Cys115.

The protein belongs to the fungal hydrophobin family. Self-assembles to form functional amyloid fibrils called rodlets. Self-assembly into fibrillar rodlets occurs spontaneously at hydrophobic:hydrophilic interfaces and the rodlets further associate laterally to form amphipathic monolayers.

It localises to the secreted. The protein resides in the cell wall. Functionally, aerial growth, conidiation, and dispersal of filamentous fungi in the environment rely upon a capability of their secreting small amphipathic proteins called hydrophobins (HPBs) with low sequence identity. Class I can self-assemble into an outermost layer of rodlet bundles on aerial cell surfaces, conferring cellular hydrophobicity that supports fungal growth, development and dispersal; whereas Class II form highly ordered films at water-air interfaces through intermolecular interactions but contribute nothing to the rodlet structure. Hah2 is a class I hydrophobin that is involved in aerial growth of mycelia, but does not play a role in pathogenesis. This Heterobasidion annosum (Root rot fungus) protein is Class I hydrophobin 2.